The chain runs to 545 residues: Autoimmune regulator (545 aa).

An HSR domain is found at 1-105 (MATDAALRRL…ILDSFPKDVD (105 aa)). Short sequence motifs (LXXLL motif) lie at residues 7–11 (LRRLL) and 63–67 (LSWLL). Disordered stretches follow at residues 101–178 (PKDV…LPLG) and 234–290 (SKFE…SDPQ). Pro residues predominate over residues 116-128 (PAVPKALVPPPRL). A compositionally biased stretch (low complexity) spans 140–152 (AAAPAALTPRGTA). Positions 181–280 (IQTMSASVQR…ARLGQQGSVP (100 aa)) constitute an SAND domain. 3 interaction with histone H3 not methylated at 'Lys-4' regions span residues 295–298 (NEDE), 304–312 (DGGELICCD), and 331–335 (PSGTW). The PHD-type 1 zinc finger occupies 296–343 (EDECAVCRDGGELICCDGCPRAFHLACLSPPLREIPSGTWRCSSCLQA). Residues 348-382 (VQPRAEEPRPQEPPVETPLPPGLRSAGEEVRGPPG) form a disordered region. A compositionally biased stretch (pro residues) spans 358–368 (QEPPVETPLPP). The LXXLL motif 3 signature appears at 414–418 (LHPLL). The PHD-type 2 zinc-finger motif lies at 434-475 (CGVCGDGTDVLRCTHCAAAFHWRCHFPAGTSRPGTGLRCRSC). Residues 489 to 508 (APSPARLAPGPAKDDTASHE) form a disordered region. The short motif at 516–520 (LESLL) is the LXXLL motif 4 element.

In terms of assembly, homodimer and homotetramer. Interacts with CREBBP. Interacts preferentially with histone H3 that is not methylated at 'Lys-4'. Binds with lower affinity to histone H3 that is monomethylated at 'Lys-4'. Trimethylation of histone H3 at 'Lys-4' or phosphorylation at 'Thr-3' abolish the interaction. Binds with lower affinity to histone H3 that is acetylated at 'Lys-4', or that is acetylated at 'Lys-9' or trimethylated at 'Lys-9'. Binds histone H3 that is dimethylated at 'Arg-2' with very low affinity. Phosphorylated. Phosphorylation could trigger oligomerization. Widely expressed. Expressed at higher level in thymus (medullary epithelial cells and monocyte-dendritic cells), pancreas, adrenal cortex and testis. Expressed at lower level in the spleen, fetal liver and lymph nodes. In secondary lymphoid organs, expressed in a discrete population of bone marrow-derived toleregenic antigen presenting cells (APCs) called extrathymic AIRE expressing cells (eTAC)(at protein level). Isoform 2 and isoform 3 seem to be less frequently expressed than isoform 1, if at all.

The protein localises to the nucleus. It localises to the cytoplasm. Transcription factor playing an essential role to promote self-tolerance in the thymus by regulating the expression of a wide array of self-antigens that have the commonality of being tissue-restricted in their expression pattern in the periphery, called tissue restricted antigens (TRA). Binds to G-doublets in an A/T-rich environment; the preferred motif is a tandem repeat of 5'-ATTGGTTA-3' combined with a 5'-TTATTA-3' box. Binds to nucleosomes. Binds to chromatin and interacts selectively with histone H3 that is not methylated at 'Lys-4', not phosphorylated at 'Thr-3' and not methylated at 'Arg-2'. Functions as a sensor of histone H3 modifications that are important for the epigenetic regulation of gene expression. Mainly expressed by medullary thymic epithelial cells (mTECs), induces the expression of thousands of tissue-restricted proteins, which are presented on major histocompatibility complex class I (MHC-I) and MHC-II molecules to developing T-cells percolating through the thymic medulla. Also induces self-tolerance through other mechanisms such as the regulation of the mTEC differentiation program. Controls the medullary accumulation of thymic dendritic cells and the development of regulatory T-cell through the regulation of XCL1 expression. Regulates the production of CCR4 and CCR7 ligands in medullary thymic epithelial cells and alters the coordinated maturation and migration of thymocytes. In thimic B-cells, allows the presentation of licensing-dependent endogenous self-anitgen for negative selection. In secondary lymphoid organs, induces functional inactivation of CD4(+) T-cells. Expressed by a distinct bone marrow-derived population, induces self-tolerance through a mechanism that does not require regulatory T-cells and is resitant to innate inflammatory stimuli. This chain is Autoimmune regulator (AIRE), found in Homo sapiens (Human).